We begin with the raw amino-acid sequence, 401 residues long: Mitochondrial distribution and morphology protein 12 (401 aa).

One can recognise an SMP-LTD domain in the interval 1-401 (MSIDINWDTL…VYPSFWTFLV (401 aa)). Positions 70-88 (YEEDEDYPDNEDDDDDEAG) are enriched in acidic residues. 2 disordered regions span residues 70–95 (YEED…NPRN) and 190–247 (SLTL…EKSP). A compositionally biased stretch (low complexity) spans 195 to 205 (PQSHPDPSSRP). A compositionally biased stretch (basic and acidic residues) spans 209–220 (HQHDDERRRSLA).

This sequence belongs to the MDM12 family. Component of the ER-mitochondria encounter structure (ERMES) or MDM complex, composed of MMM1, MDM10, MDM12 and MDM34. An MMM1 homodimer associates with one molecule of MDM12 on each side in a pairwise head-to-tail manner, and the SMP-LTD domains of MMM1 and MDM12 generate a continuous hydrophobic tunnel for phospholipid trafficking.

Its subcellular location is the mitochondrion outer membrane. It localises to the endoplasmic reticulum membrane. In terms of biological role, component of the ERMES/MDM complex, which serves as a molecular tether to connect the endoplasmic reticulum (ER) and mitochondria. Components of this complex are involved in the control of mitochondrial shape and protein biogenesis, and function in nonvesicular lipid trafficking between the ER and mitochondria. MDM12 is required for the interaction of the ER-resident membrane protein MMM1 and the outer mitochondrial membrane-resident beta-barrel protein MDM10. The MDM12-MMM1 subcomplex functions in the major beta-barrel assembly pathway that is responsible for biogenesis of all mitochondrial outer membrane beta-barrel proteins, and acts in a late step after the SAM complex. The MDM10-MDM12-MMM1 subcomplex further acts in the TOM40-specific pathway after the action of the MDM12-MMM1 complex. Essential for establishing and maintaining the structure of mitochondria and maintenance of mtDNA nucleoids. The chain is Mitochondrial distribution and morphology protein 12 from Phaeosphaeria nodorum (strain SN15 / ATCC MYA-4574 / FGSC 10173) (Glume blotch fungus).